The primary structure comprises 384 residues: Dual-specificity RNA methyltransferase RlmN (384 aa).

E105 (proton acceptor) is an active-site residue. One can recognise a Radical SAM core domain in the interval 111 to 350 (EDDRATLCVS…TIVRKTRGDD (240 aa)). A disulfide bridge links C118 with C355. The [4Fe-4S] cluster site is built by C125, C129, and C132. Residues 179 to 180 (GE), S211, 233 to 235 (SLH), and N312 contribute to the S-adenosyl-L-methionine site. C355 serves as the catalytic S-methylcysteine intermediate.

It belongs to the radical SAM superfamily. RlmN family. It depends on [4Fe-4S] cluster as a cofactor.

It is found in the cytoplasm. The catalysed reaction is adenosine(2503) in 23S rRNA + 2 reduced [2Fe-2S]-[ferredoxin] + 2 S-adenosyl-L-methionine = 2-methyladenosine(2503) in 23S rRNA + 5'-deoxyadenosine + L-methionine + 2 oxidized [2Fe-2S]-[ferredoxin] + S-adenosyl-L-homocysteine. The enzyme catalyses adenosine(37) in tRNA + 2 reduced [2Fe-2S]-[ferredoxin] + 2 S-adenosyl-L-methionine = 2-methyladenosine(37) in tRNA + 5'-deoxyadenosine + L-methionine + 2 oxidized [2Fe-2S]-[ferredoxin] + S-adenosyl-L-homocysteine. Its function is as follows. Specifically methylates position 2 of adenine 2503 in 23S rRNA and position 2 of adenine 37 in tRNAs. m2A2503 modification seems to play a crucial role in the proofreading step occurring at the peptidyl transferase center and thus would serve to optimize ribosomal fidelity. The chain is Dual-specificity RNA methyltransferase RlmN from Shigella boydii serotype 18 (strain CDC 3083-94 / BS512).